Here is a 161-residue protein sequence, read N- to C-terminus: Zinc finger A20 and AN1 domain-containing stress-associated protein 4 (161 aa).

The A20-type zinc finger occupies 10–44; the sequence is PEGHRLCVNNCGFFGSSATMNLCSNCYGDLCLKQQ. The Zn(2+) site is built by C16, C20, C32, and C35. Over residues 76 to 85 the composition is skewed to basic and acidic residues; the sequence is TTKKTEEKKP. A disordered region spans residues 76 to 99; the sequence is TTKKTEEKKPIQIPTEQPSPPQRP. The segment at 96–142 adopts an AN1-type zinc-finger fold; it reads PQRPNRCTVCRKRVGLTGFMCRCGTTFCGSHRYPEVHGCTFDFKSAG. 8 residues coordinate Zn(2+): C102, C105, C116, C118, C123, H126, H132, and C134.

Functionally, may be involved in environmental stress response. The sequence is that of Zinc finger A20 and AN1 domain-containing stress-associated protein 4 (SAP4) from Arabidopsis thaliana (Mouse-ear cress).